Consider the following 684-residue polypeptide: DNA-directed RNA polymerase subunit beta' (684 aa).

Zn(2+)-binding residues include Cys69, Cys71, Cys87, and Cys90. Mg(2+)-binding residues include Asp491, Asp493, and Asp495.

The protein belongs to the RNA polymerase beta' chain family. RpoC1 subfamily. In plastids the minimal PEP RNA polymerase catalytic core is composed of four subunits: alpha, beta, beta', and beta''. When a (nuclear-encoded) sigma factor is associated with the core the holoenzyme is formed, which can initiate transcription. Mg(2+) serves as cofactor. Requires Zn(2+) as cofactor.

It localises to the plastid. The protein localises to the chloroplast. The enzyme catalyses RNA(n) + a ribonucleoside 5'-triphosphate = RNA(n+1) + diphosphate. Its function is as follows. DNA-dependent RNA polymerase catalyzes the transcription of DNA into RNA using the four ribonucleoside triphosphates as substrates. The protein is DNA-directed RNA polymerase subunit beta' of Phaseolus vulgaris (Kidney bean).